A 404-amino-acid chain; its full sequence is Glucose-1-phosphate adenylyltransferase (404 aa).

Residues Tyr99, Gly164, 179–180 (EK), and Ser197 each bind alpha-D-glucose 1-phosphate.

The protein belongs to the bacterial/plant glucose-1-phosphate adenylyltransferase family.

The catalysed reaction is alpha-D-glucose 1-phosphate + ATP + H(+) = ADP-alpha-D-glucose + diphosphate. The protein operates within capsule biogenesis; capsule polysaccharide biosynthesis. Its pathway is glycan biosynthesis; glycogen biosynthesis. Its function is as follows. Involved in the biosynthesis of ADP-glucose, a building block, required in the biosynthesis of maltose-1-phosphate (M1P) and in the elongation reactions to produce linear alpha-1,4-glucans. Catalyzes the reaction between ATP and alpha-D-glucose 1-phosphate (G1P) to produce pyrophosphate and ADP-Glc. In Mycobacterium bovis (strain ATCC BAA-935 / AF2122/97), this protein is Glucose-1-phosphate adenylyltransferase.